A 196-amino-acid polypeptide reads, in one-letter code: Ribosomal RNA small subunit methyltransferase G (196 aa).

Residues Gly77, Phe82, Ala127–Glu128, and Arg140 each bind S-adenosyl-L-methionine.

Belongs to the methyltransferase superfamily. RNA methyltransferase RsmG family.

It is found in the cytoplasm. In terms of biological role, specifically methylates the N7 position of a guanine in 16S rRNA. The chain is Ribosomal RNA small subunit methyltransferase G from Aquifex aeolicus (strain VF5).